The chain runs to 290 residues: Small ribosomal subunit biogenesis GTPase RsgA (290 aa).

The 152-residue stretch at 62-213 folds into the CP-type G domain; sequence KNSLVRPPIV…IADTPGFSSL (152 aa). GTP-binding positions include 111–114 and 156–164; these read SKMD and GQTGVGKST. Zn(2+)-binding residues include Cys-237, Cys-242, His-244, and Cys-250.

It belongs to the TRAFAC class YlqF/YawG GTPase family. RsgA subfamily. Monomer. Associates with 30S ribosomal subunit, binds 16S rRNA. Zn(2+) serves as cofactor.

Its subcellular location is the cytoplasm. Functionally, one of several proteins that assist in the late maturation steps of the functional core of the 30S ribosomal subunit. Helps release RbfA from mature subunits. May play a role in the assembly of ribosomal proteins into the subunit. Circularly permuted GTPase that catalyzes slow GTP hydrolysis, GTPase activity is stimulated by the 30S ribosomal subunit. This is Small ribosomal subunit biogenesis GTPase RsgA from Streptococcus pyogenes serotype M6 (strain ATCC BAA-946 / MGAS10394).